Here is a 207-residue protein sequence, read N- to C-terminus: Small ribosomal subunit protein bS6c (207 aa).

The transit peptide at 1 to 59 directs the protein to the chloroplast; that stretch reads MASSLCVSNSTICPLPNVSSQPLLSFSHSLRPFISKSKPMCASIQKRDGSQFVVKSQAL. The segment at 69 to 99 is disordered; the sequence is GFGSDDDPTSPSGSGVSTALEDKPEPQCPPG. Positions 77–86 are enriched in low complexity; sequence TSPSGSGVST.

The protein belongs to the bacterial ribosomal protein bS6 family. Part of the 30S ribosomal subunit.

It is found in the plastid. The protein localises to the chloroplast. In terms of biological role, binds together with bS18 to 16S ribosomal RNA. The sequence is that of Small ribosomal subunit protein bS6c (RPS6) from Arabidopsis thaliana (Mouse-ear cress).